The primary structure comprises 816 residues: S-layer protein (816 aa).

The signal sequence occupies residues 1 to 29; it reads MAKTNSYKKVIAGTMTAAMVAGVVSPVAA. SLH domains lie at 30 to 93, 94 to 150, and 152 to 215; these read AGKS…DAKP, SFAD…KVNG, and PATK…VAKV. One can recognise a BIG2 domain in the interval 403 to 480; it reads FTSKDFKQND…TVKDSKGKEL (78 aa).

The protein resides in the secreted. It is found in the cell wall. It localises to the S-layer. Functionally, the S-layer is a paracrystalline mono-layered assembly of proteins which coat the surface of bacteria. The sequence is that of S-layer protein from Bacillus thuringiensis subsp. finitimus.